Consider the following 100-residue polypeptide: Aspartyl/glutamyl-tRNA(Asn/Gln) amidotransferase subunit C (100 aa).

The protein belongs to the GatC family. As to quaternary structure, heterotrimer of A, B and C subunits.

It catalyses the reaction L-glutamyl-tRNA(Gln) + L-glutamine + ATP + H2O = L-glutaminyl-tRNA(Gln) + L-glutamate + ADP + phosphate + H(+). It carries out the reaction L-aspartyl-tRNA(Asn) + L-glutamine + ATP + H2O = L-asparaginyl-tRNA(Asn) + L-glutamate + ADP + phosphate + 2 H(+). Its function is as follows. Allows the formation of correctly charged Asn-tRNA(Asn) or Gln-tRNA(Gln) through the transamidation of misacylated Asp-tRNA(Asn) or Glu-tRNA(Gln) in organisms which lack either or both of asparaginyl-tRNA or glutaminyl-tRNA synthetases. The reaction takes place in the presence of glutamine and ATP through an activated phospho-Asp-tRNA(Asn) or phospho-Glu-tRNA(Gln). The polypeptide is Aspartyl/glutamyl-tRNA(Asn/Gln) amidotransferase subunit C (Streptococcus gordonii (strain Challis / ATCC 35105 / BCRC 15272 / CH1 / DL1 / V288)).